A 657-amino-acid polypeptide reads, in one-letter code: Bifunctional lysine-specific demethylase and histidyl-hydroxylase NO66 (657 aa).

2 disordered regions span residues 1–141 (MQKA…QTSP) and 165–198 (KSCP…NSNE). Over residues 32 to 41 (SAKTVDTVTD) the composition is skewed to polar residues. Over residues 55-71 (AEKERRKYLQARVRAEG) the composition is skewed to basic and acidic residues. 2 stretches are compositionally biased toward polar residues: residues 73 to 84 (SASTSSKSNATR) and 132 to 141 (RSQGLEQTSP). Serine 133 is subject to Phosphoserine. Phosphothreonine is present on threonine 139. Serine 140 is subject to Phosphoserine. The region spanning 315-454 (NPSTYLLGLR…NLLETLMPIV (140 aa)) is the JmjC domain. The Fe cation site is built by histidine 355, aspartate 357, and histidine 420.

Belongs to the ROX family. NO66 subfamily. The cofactor is Fe(2+).

It localises to the nucleus. The catalysed reaction is N(6),N(6)-dimethyl-L-lysyl(36)-[histone H3] + 2 2-oxoglutarate + 2 O2 = L-lysyl(36)-[histone H3] + 2 formaldehyde + 2 succinate + 2 CO2. Its function is as follows. Oxygenase that can act as both a histone lysine demethylase and a ribosomal histidine hydroxylase. Specifically demethylates 'Lys-4' (H3K4me) and 'Lys-36' (H3K36me) of histone H3, thereby playing a central role in histone code. The sequence is that of Bifunctional lysine-specific demethylase and histidyl-hydroxylase NO66 from Drosophila erecta (Fruit fly).